The primary structure comprises 195 residues: 3-hydroxyanthranilate 3,4-dioxygenase (195 aa).

Arg-50 provides a ligand contact to O2. Fe cation contacts are provided by His-54, Glu-60, and His-102. Glu-60 contributes to the substrate binding site. Positions 106 and 116 each coordinate substrate. Residues Cys-131, Cys-136, Cys-170, and Cys-173 each contribute to the a divalent metal cation site.

It belongs to the 3-HAO family. The cofactor is Fe(2+).

The protein resides in the cytoplasm. It catalyses the reaction 3-hydroxyanthranilate + O2 = (2Z,4Z)-2-amino-3-carboxymuconate 6-semialdehyde. The protein operates within cofactor biosynthesis; NAD(+) biosynthesis; quinolinate from L-kynurenine: step 3/3. In terms of biological role, catalyzes the oxidative ring opening of 3-hydroxyanthranilate to 2-amino-3-carboxymuconate semialdehyde, which spontaneously cyclizes to quinolinate. The polypeptide is 3-hydroxyanthranilate 3,4-dioxygenase (bna1) (Aspergillus terreus (strain NIH 2624 / FGSC A1156)).